Here is a 119-residue protein sequence, read N- to C-terminus: Large ribosomal subunit protein bL20 (119 aa).

The protein belongs to the bacterial ribosomal protein bL20 family.

Binds directly to 23S ribosomal RNA and is necessary for the in vitro assembly process of the 50S ribosomal subunit. It is not involved in the protein synthesizing functions of that subunit. The sequence is that of Large ribosomal subunit protein bL20 from Coxiella burnetii (strain CbuK_Q154) (Coxiella burnetii (strain Q154)).